The following is a 478-amino-acid chain: Putative multidrug resistance outer membrane protein MdtQ (478 aa).

The N-terminal stretch at 1–21 (MNRDSFYPAIACFPLLLMLAG) is a signal peptide. A lipid anchor (N-palmitoyl cysteine) is attached at Cys-22. Residue Cys-22 is the site of S-diacylglycerol cysteine attachment.

It belongs to the outer membrane factor (OMF) (TC 1.B.17) family.

The protein localises to the cell outer membrane. Its function is as follows. Could be involved in resistance to puromycin, acriflavine and tetraphenylarsonium chloride. In Shigella flexneri, this protein is Putative multidrug resistance outer membrane protein MdtQ (mdtQ).